The chain runs to 222 residues: GMP/IMP nucleotidase YrfG (222 aa).

The active-site Nucleophile is Asp-9. Mg(2+)-binding residues include Asp-9 and Asp-11. Substrate-binding positions include 9–11 (DVD) and Lys-149. Asp-174 is a binding site for Mg(2+).

The protein belongs to the HAD-like hydrolase superfamily. It depends on Mg(2+) as a cofactor. Mn(2+) serves as cofactor. The cofactor is Co(2+). Zn(2+) is required as a cofactor.

It catalyses the reaction a ribonucleoside 5'-phosphate + H2O = a ribonucleoside + phosphate. Catalyzes the dephosphorylation of different purine nucleotides (GMP and IMP). Also hydrolyzes flavin mononucleotide (FMN). This Escherichia coli (strain K12) protein is GMP/IMP nucleotidase YrfG (yrfG).